Consider the following 684-residue polypeptide: MSAKDFLVELGTEELPPKALNSLGEAFLSGIEKGLKAAGLSYAAARFYAAPRRLAVLVEQLAVQQPDRTVNLDGPPLQAAFDASGNPTQAALGFAKKCGVDLQQIDKSGPKLRFSQTIAGQPAAGLLPGIVEASLNELPIPKRMRWAARREEFVRPTQWLVMLFGDDVVECEILAQKAGRESRGHRFHNPDNVRISSPAAYLEDLRGAHVLADFAERRELIAKRVAELAAEQQGSAIVPPSLLDEVTALVEWPVPLVCSFEERFLEVPQEALITTMQDNQKYFCLLDANGKLLPRFITVANVESKAPENIVSGNEKVVRPRLTDAEFFFKQDKKQPLESFNERLRNVVFQAQLGTVFEKAQRVSGLAAYIAERIGGNAQNASRAGILSKCDLATEMVGEFPEMQGIAGYYYATHGGEAEDVALALNEQYMPRGAGAELPSTLTGAAVAVADKLDTLVGIFGIGMLPTGSKDPYALRRAALGVLRILIEKQLDLDLVAAVNAAVEQYGDKVKAAGLAEQVLDFVFDRLRARYEDEGVDVAVYQSVRALKPSSPLDFDQRVQAVQAFRQLPEAEALAAANKRVSNILAKSEDEVPPNVDASLLVEAAEKALGSAVANAESEVAPLAAARDYRAALARLAALREPVDTFFADVMVNVDDAAVRANRYALLAKLRGSFLGVADISLLG.

This sequence belongs to the class-II aminoacyl-tRNA synthetase family. In terms of assembly, tetramer of two alpha and two beta subunits.

It localises to the cytoplasm. It catalyses the reaction tRNA(Gly) + glycine + ATP = glycyl-tRNA(Gly) + AMP + diphosphate. The chain is Glycine--tRNA ligase beta subunit from Pseudomonas aeruginosa (strain LESB58).